A 492-amino-acid chain; its full sequence is N-succinylglutamate 5-semialdehyde dehydrogenase (492 aa).

An NAD(+)-binding site is contributed by 220-225; that stretch reads GSASTG. Catalysis depends on residues glutamate 243 and cysteine 277.

This sequence belongs to the aldehyde dehydrogenase family. AstD subfamily.

The catalysed reaction is N-succinyl-L-glutamate 5-semialdehyde + NAD(+) + H2O = N-succinyl-L-glutamate + NADH + 2 H(+). It participates in amino-acid degradation; L-arginine degradation via AST pathway; L-glutamate and succinate from L-arginine: step 4/5. In terms of biological role, catalyzes the NAD-dependent reduction of succinylglutamate semialdehyde into succinylglutamate. The sequence is that of N-succinylglutamate 5-semialdehyde dehydrogenase from Salmonella paratyphi C (strain RKS4594).